A 225-amino-acid chain; its full sequence is Phosphatidylserine decarboxylase proenzyme (225 aa).

S182 serves as the catalytic Schiff-base intermediate with substrate; via pyruvic acid. A Pyruvic acid (Ser); by autocatalysis modification is found at S182.

Belongs to the phosphatidylserine decarboxylase family. PSD-A subfamily. In terms of assembly, heterodimer of a large membrane-associated beta subunit and a small pyruvoyl-containing alpha subunit. Pyruvate is required as a cofactor. Post-translationally, is synthesized initially as an inactive proenzyme. Formation of the active enzyme involves a self-maturation process in which the active site pyruvoyl group is generated from an internal serine residue via an autocatalytic post-translational modification. Two non-identical subunits are generated from the proenzyme in this reaction, and the pyruvate is formed at the N-terminus of the alpha chain, which is derived from the carboxyl end of the proenzyme. The post-translation cleavage follows an unusual pathway, termed non-hydrolytic serinolysis, in which the side chain hydroxyl group of the serine supplies its oxygen atom to form the C-terminus of the beta chain, while the remainder of the serine residue undergoes an oxidative deamination to produce ammonia and the pyruvoyl prosthetic group on the alpha chain.

It is found in the cell membrane. The catalysed reaction is a 1,2-diacyl-sn-glycero-3-phospho-L-serine + H(+) = a 1,2-diacyl-sn-glycero-3-phosphoethanolamine + CO2. Its pathway is phospholipid metabolism; phosphatidylethanolamine biosynthesis; phosphatidylethanolamine from CDP-diacylglycerol: step 2/2. In terms of biological role, catalyzes the formation of phosphatidylethanolamine (PtdEtn) from phosphatidylserine (PtdSer). The chain is Phosphatidylserine decarboxylase proenzyme from Neorickettsia sennetsu (strain ATCC VR-367 / Miyayama) (Ehrlichia sennetsu).